The following is a 215-amino-acid chain: LysM and putative peptidoglycan-binding domain-containing protein 2 (215 aa).

The tract at residues 1-40 (MADSSPAPSLRAGGPREPRPSAPSPPPPHSRLGSEAEEAE) is disordered. A2 carries the post-translational modification N-acetylalanine. 4 positions are modified to phosphoserine: S5, S24, S34, and S58. Residues 20 to 29 (PSAPSPPPPH) are compositionally biased toward pro residues. Positions 72–116 (VEHRVRAGDTLQGIALKYGVSMEQIKRANKLFTNDCIFLKKTLNI) constitute a LysM domain. A disordered region spans residues 194–215 (AKKLKGESRDEEGLYTASLYHS).

The chain is LysM and putative peptidoglycan-binding domain-containing protein 2 (LYSMD2) from Bos taurus (Bovine).